Here is a 1515-residue protein sequence, read N- to C-terminus: Metal resistance protein YCF1 (1515 aa).

The Vacuolar segment spans residues 1–32 (MAGNLVSWACKLCRSPEGFGPISFYGDFTQCF). The helical transmembrane segment at 33 to 53 (IDGVILNLSAIFMITFGIRDL) threads the bilayer. Residues 54 to 73 (VNLCKKKHSGIKYRRNWIIV) are Cytoplasmic-facing. A helical transmembrane segment spans residues 74–94 (SRMALVLLEIAFVSLASLNIS). The Vacuolar portion of the chain corresponds to 95–99 (KEEAE). A helical membrane pass occupies residues 100–120 (NFTIVSQYASTMLSLFVALAL). At 121–130 (HWIEYDRSVV) the chain is on the cytoplasmic side. Residues 131–151 (ANTVLLFYWLFETFGNFAKLI) form a helical membrane-spanning segment. Topologically, residues 152-169 (NILIRHTYEGIWYSGQTG) are vacuolar. The chain crosses the membrane as a helical span at residues 170 to 190 (FILTLFQVITCASILLLEALP). Over 191–278 (KKPLMPHQHI…QKSNPSLSWA (88 aa)) the chain is Cytoplasmic. The residue at position 251 (Ser251) is a Phosphoserine. Residues 279-299 (ICRTFGSKMLLAAFFKAIHDV) traverse the membrane as a helical segment. The 304-residue stretch at 287–590 (MLLAAFFKAI…IPMVLNSFIE (304 aa)) folds into the ABC transmembrane type-1 1 domain. The Vacuolar portion of the chain corresponds to 300–345 (LAFTQPQLLRILIKFVTDYNSERQDDHSSLQGFENNHPQKLPIVRG). Residues 346–366 (FLIAFAMFLVGFTQTSVLHQY) traverse the membrane as a helical segment. Residues 367–422 (FLNVFNTGMYIKSALTALIYQKSLVLSNEASGLSSTGDIVNLMSVDVQKLQDLTQW) lie on the Cytoplasmic side of the membrane. The helical transmembrane segment at 423–443 (LNLIWSGPFQIIICLYSLYKL) threads the bilayer. Over 444–446 (LGN) the chain is Vacuolar. The chain crosses the membrane as a helical span at residues 447-467 (SMWVGVIILVIMMPLNSFLMR). At 468-530 (IQKKLQKSQM…NLTKLGCYMA (63 aa)) the chain is on the cytoplasmic side. A helical transmembrane segment spans residues 531 to 551 (VTSFQFNIVPFLVSCCTFAVF). The Vacuolar segment spans residues 552–572 (VYTEDRALTTDLVFPALTLFN). A helical membrane pass occupies residues 573–593 (LLSFPLMIIPMVLNSFIEASV). At 594-943 (SIGRLFTFFT…VKWNIYLEYA (350 aa)) the chain is on the cytoplasmic side. An ABC transporter 1 domain is found at 626–853 (INIGDDATFL…ADSPLWKLLN (228 aa)). 663–670 (GKVGSGKT) lines the ATP pocket. Phosphoserine is present on residues Ser873, Ser903, and Ser908. Thr911 is modified (phosphothreonine). Ser914 is subject to Phosphoserine. A helical membrane pass occupies residues 944–964 (KACNPKSVCVFILFIVISMFL). In terms of domain architecture, ABC transmembrane type-1 2 spans 951 to 1235 (VCVFILFIVI…IVRMTVEVET (285 aa)). Residues 965–1001 (SVMGNVWLKHWSEVNSRYGSNPNAARYLAIYFALGIG) are Vacuolar-facing. A helical transmembrane segment spans residues 1002-1023 (SALATLIQTIVLWVFCTIHASK). Topologically, residues 1024 to 1066 (YLHNLMTNSVLRAPMTFFETTPIGRILNRFSNDIYKVDALLGR) are cytoplasmic. The chain crosses the membrane as a helical span at residues 1067–1087 (TFSQFFVNAVKVTFTITVICA). Position 1088 (Thr1088) is a topological domain, vacuolar. The helical transmembrane segment at 1089–1109 (TWQFIFIIIPLSVFYIYYQQY) threads the bilayer. Topologically, residues 1110 to 1180 (YLRTSRELRR…NANRWLAYRL (71 aa)) are cytoplasmic. A helical membrane pass occupies residues 1181-1201 (ELIGSIIILGAATLSVFRLKQ). The Vacuolar segment spans residues 1202 to 1205 (GTLT). Residues 1206-1226 (AGMVGLSLSYALQITQTLNWI) form a helical membrane-spanning segment. Over 1227-1515 (VRMTVEVETN…CMEAGLVNEN (289 aa)) the chain is Cytoplasmic. Positions 1272–1507 (IKFNNYSTRY…NKSLFYSLCM (236 aa)) constitute an ABC transporter 2 domain. An ATP-binding site is contributed by 1306-1313 (GRTGAGKS).

The protein belongs to the ABC transporter superfamily. ABCC family. Conjugate transporter (TC 3.A.1.208) subfamily.

It localises to the vacuole membrane. It catalyses the reaction Cd(2+)(in) + ATP + H2O = Cd(2+)(out) + ADP + phosphate + H(+). The catalysed reaction is an S-substituted glutathione(in) + ATP + H2O = an S-substituted glutathione(out) + ADP + phosphate + H(+). Its function is as follows. Cooperates for the ATP-dependent vacuolar transport of bilirubin and glutathione conjugates. In Saccharomyces cerevisiae (strain ATCC 204508 / S288c) (Baker's yeast), this protein is Metal resistance protein YCF1 (YCF1).